Reading from the N-terminus, the 392-residue chain is Bone morphogenetic protein 15 (392 aa).

An N-terminal signal peptide occupies residues 1–25; the sequence is MALLTILRILLWGVVLFMEQRVQMA. Residues 26 to 267 constitute a propeptide that is removed on maturation; the sequence is KPGWPSTALL…ESSFLMRSVR (242 aa). Residues Asn85, Asn213, Asn236, Asn349, and Asn373 are each glycosylated (N-linked (GlcNAc...) asparagine). 3 disulfides stabilise this stretch: Cys291-Cys357, Cys320-Cys389, and Cys324-Cys391.

The protein belongs to the TGF-beta family. Homodimer. But, in contrast to other members of this family, cannot be disulfide-linked. As to expression, ovary specific.

The protein resides in the secreted. May be involved in follicular development. Oocyte-specific growth/differentiation factor that stimulates folliculogenesis and granulosa cell (GC) growth. This is Bone morphogenetic protein 15 (Bmp15) from Mus musculus (Mouse).